A 533-amino-acid polypeptide reads, in one-letter code: Retinoid isomerohydrolase (533 aa).

Cysteine 112 carries S-palmitoyl cysteine; in membrane form lipidation. At serine 117 the chain carries Phosphoserine. Residue histidine 180 participates in Fe cation binding. Cysteine 231 is lipidated: S-palmitoyl cysteine; in membrane form. Residues histidine 241 and histidine 313 each coordinate Fe cation. Residue cysteine 329 is the site of S-palmitoyl cysteine; in membrane form attachment. Histidine 527 contributes to the Fe cation binding site.

Belongs to the carotenoid oxygenase family. It depends on Fe(2+) as a cofactor. Post-translationally, palmitoylation by LRAT regulates ligand binding specificity; the palmitoylated form (membrane form) specifically binds all-trans-retinyl-palmitate, while the soluble unpalmitoylated form binds all-trans-retinol (vitamin A). Retinal pigment epithelium specific.

It is found in the cytoplasm. The protein localises to the cell membrane. It localises to the microsome membrane. It carries out the reaction an all-trans-retinyl ester + H2O = 11-cis-retinol + a fatty acid + H(+). The catalysed reaction is lutein = (3R,3'S)-zeaxanthin. The enzyme catalyses all-trans-retinyl hexadecanoate + H2O = 11-cis-retinol + hexadecanoate + H(+). Functionally, critical isomerohydrolase in the retinoid cycle involved in regeneration of 11-cis-retinal, the chromophore of rod and cone opsins. Catalyzes the cleavage and isomerization of all-trans-retinyl fatty acid esters to 11-cis-retinol which is further oxidized by 11-cis retinol dehydrogenase to 11-cis-retinal for use as visual chromophore. Essential for the production of 11-cis retinal for both rod and cone photoreceptors. Also capable of catalyzing the isomerization of lutein to meso-zeaxanthin an eye-specific carotenoid. The soluble form binds vitamin A (all-trans-retinol), making it available for LRAT processing to all-trans-retinyl ester. The membrane form, palmitoylated by LRAT, binds all-trans-retinyl esters, making them available for IMH (isomerohydrolase) processing to all-cis-retinol. The soluble form is regenerated by transferring its palmitoyl groups onto 11-cis-retinol, a reaction catalyzed by LRAT. The polypeptide is Retinoid isomerohydrolase (RPE65) (Gallus gallus (Chicken)).